The sequence spans 94 residues: Putative RNA-binding protein RbpD (94 aa).

Residues 2 to 79 (TIYVGNLSYR…RQLRVNKAKP (78 aa)) form the RRM domain. The interval 73–94 (RVNKAKPREDDRRGSWGKKQDY) is disordered. The span at 78-94 (KPREDDRRGSWGKKQDY) shows a compositional bias: basic and acidic residues.

This Nostoc sp. (strain PCC 7120 / SAG 25.82 / UTEX 2576) protein is Putative RNA-binding protein RbpD (rbpD).